The primary structure comprises 244 residues: 1-(5-phosphoribosyl)-5-[(5-phosphoribosylamino)methylideneamino] imidazole-4-carboxamide isomerase (244 aa).

Asp-8 (proton acceptor) is an active-site residue. Asp-130 (proton donor) is an active-site residue.

The protein belongs to the HisA/HisF family.

The protein resides in the cytoplasm. It catalyses the reaction 1-(5-phospho-beta-D-ribosyl)-5-[(5-phospho-beta-D-ribosylamino)methylideneamino]imidazole-4-carboxamide = 5-[(5-phospho-1-deoxy-D-ribulos-1-ylimino)methylamino]-1-(5-phospho-beta-D-ribosyl)imidazole-4-carboxamide. It functions in the pathway amino-acid biosynthesis; L-histidine biosynthesis; L-histidine from 5-phospho-alpha-D-ribose 1-diphosphate: step 4/9. This Syntrophomonas wolfei subsp. wolfei (strain DSM 2245B / Goettingen) protein is 1-(5-phosphoribosyl)-5-[(5-phosphoribosylamino)methylideneamino] imidazole-4-carboxamide isomerase.